The following is a 640-amino-acid chain: Isoniazid-induced protein IniA (640 aa).

The helical transmembrane segment at 497 to 519 (IGMLSSVVGLGLFNPLSVGAGLI) threads the bilayer. Residues 560–628 (RDRLKMIQRL…QVNDNLAGLE (69 aa)) adopt a coiled-coil conformation.

In terms of assembly, forms multimeric structures containing a central pore.

It is found in the cell membrane. In terms of biological role, participates in the development of tolerance to both isoniazid and ethambutol. May function through a MDR-pump like mechanism, although it does not appear to directly transport isoniazid from the cell. The polypeptide is Isoniazid-induced protein IniA (iniA) (Mycobacterium tuberculosis (strain CDC 1551 / Oshkosh)).